Here is a 117-residue protein sequence, read N- to C-terminus: Immunoglobulin kappa variable 1D-16 (117 aa).

A signal peptide spans 1–22 (MDMRVLAQLLGLLLLCFPGARC). A framework-1 region spans residues 23–45 (DIQMTQSPSSLSASVGDRVTITC). Residues 24-117 (IQMTQSPSSL…YYCQQYNSYP (94 aa)) enclose the Ig-like domain. The cysteines at positions 45 and 110 are disulfide-linked. The interval 46-56 (RASQGISSWLA) is complementarity-determining-1. Residues 57 to 71 (WYQQKPEKAPKSLIY) are framework-2. Residues 72–78 (AASSLQS) form a complementarity-determining-2 region. Positions 79–110 (GVPSRFSGSGSGTDFTLTISSLQPEDFATYYC) are framework-3. Positions 111–117 (QQYNSYP) are complementarity-determining-3.

As to quaternary structure, immunoglobulins are composed of two identical heavy chains and two identical light chains; disulfide-linked.

The protein localises to the secreted. It localises to the cell membrane. V region of the variable domain of immunoglobulin light chains that participates in the antigen recognition. Immunoglobulins, also known as antibodies, are membrane-bound or secreted glycoproteins produced by B lymphocytes. In the recognition phase of humoral immunity, the membrane-bound immunoglobulins serve as receptors which, upon binding of a specific antigen, trigger the clonal expansion and differentiation of B lymphocytes into immunoglobulins-secreting plasma cells. Secreted immunoglobulins mediate the effector phase of humoral immunity, which results in the elimination of bound antigens. The antigen binding site is formed by the variable domain of one heavy chain, together with that of its associated light chain. Thus, each immunoglobulin has two antigen binding sites with remarkable affinity for a particular antigen. The variable domains are assembled by a process called V-(D)-J rearrangement and can then be subjected to somatic hypermutations which, after exposure to antigen and selection, allow affinity maturation for a particular antigen. The sequence is that of Immunoglobulin kappa variable 1D-16 from Homo sapiens (Human).